Reading from the N-terminus, the 522-residue chain is Nitrogen fixation protein VnfA (522 aa).

The a domain stretch occupies residues 22–183; sequence LLYEMSQIAT…AQAVELYLVE (162 aa). The GAF domain maps to 35 to 177; sequence DLSSIISILL…ILATTTAQAV (143 aa). Residues 210 to 439 form the Sigma-54 factor interaction domain; the sequence is IIGNSKPMLE…LENVIERAML (230 aa). ATP contacts are provided by residues 238 to 245 and 301 to 310; these read GESGVGKE and AAGGTIFLDE. Residues 493–512 constitute a DNA-binding region (H-T-H motif); it reads MTEAATHLGLTARVLGLRMG.

In terms of biological role, required for the expression of the V-dependent nitrogen fixation system in Azotobacter vinelandii. It is required for the regulation of nitrogenase 2 transcription. Interacts with sigma-54. The polypeptide is Nitrogen fixation protein VnfA (vnfA) (Azotobacter vinelandii).